Reading from the N-terminus, the 177-residue chain is Large ribosomal subunit protein uL6 (177 aa).

It belongs to the universal ribosomal protein uL6 family. As to quaternary structure, part of the 50S ribosomal subunit.

In terms of biological role, this protein binds to the 23S rRNA, and is important in its secondary structure. It is located near the subunit interface in the base of the L7/L12 stalk, and near the tRNA binding site of the peptidyltransferase center. The polypeptide is Large ribosomal subunit protein uL6 (Vibrio campbellii (strain ATCC BAA-1116)).